A 147-amino-acid polypeptide reads, in one-letter code: Peptidyl-lysine N-acetyltransferase YjaB (147 aa).

Residues 3-144 (ISIRRSRHEE…KPYPLLNLAY (142 aa)) form the N-acetyltransferase domain.

Belongs to the acetyltransferase family.

The enzyme catalyses L-lysyl-[protein] + acetyl-CoA = N(6)-acetyl-L-lysyl-[protein] + CoA + H(+). In terms of biological role, N-epsilon-lysine acetyltransferase that catalyzes acetylation of a large number of proteins. Binds acetyl-CoA. The sequence is that of Peptidyl-lysine N-acetyltransferase YjaB (yjaB) from Escherichia coli (strain K12).